The following is a 130-amino-acid chain: EG45-like domain containing protein 2 (130 aa).

The N-terminal stretch at 1–25 is a signal peptide; that stretch reads MIKMAVKFVVVMIVFAQILAPIAEA. The Expansin-like EG45 domain maps to 28–130; it reads GKAVYYDPPY…GNIRVVYTPI (103 aa). An N-linked (GlcNAc...) asparagine glycan is attached at Asn-106.

Expressed in unstressed leaves.

The protein localises to the secreted. Plays a systemic role in water and solute homeostasis. This is EG45-like domain containing protein 2 (EGC2) from Arabidopsis thaliana (Mouse-ear cress).